Reading from the N-terminus, the 341-residue chain is Eukaryotic translation initiation factor 2 subunit 1 (341 aa).

Residues 16–87 form the S1 motif domain; the sequence is EDVVMVNVLS…EKGYIDLSKR (72 aa). Ser51 is subject to Phosphoserine. A disordered region spans residues 293-341; it reads AENAQVAGDDDEEDGADQEGMQFDPEKEFNHKGSGAGRANEEDEEEEED. Residues 300–309 are compositionally biased toward acidic residues; that stretch reads GDDDEEDGAD.

Belongs to the eIF-2-alpha family. As to quaternary structure, eukaryotic translation initiation factor 2 eIF2 is a heterotrimeric complex composed of an alpha, a beta and a gamma subunit. In terms of processing, phosphorylation of eIF-2-alpha impairs the recycling of eIF-2 between successive rounds of initiation and thus leads to inhibition of translation.

The protein resides in the cytoplasm. The protein localises to the cytosol. Its function is as follows. eIF-2 functions in the early steps of protein synthesis by forming a ternary complex with GTP and initiator tRNA. This pre-initiation complex mediates ribosomal recognition of a start codon during the scanning process of the leader region. The chain is Eukaryotic translation initiation factor 2 subunit 1 from Drosophila melanogaster (Fruit fly).